A 243-amino-acid chain; its full sequence is UPF0758 protein AM1_4368 (243 aa).

Residues 113 to 235 (VIDDPAVAAA…FTSLRQTTSL (123 aa)) form the MPN domain. Zn(2+)-binding residues include His184, His186, and Asp197. Residues 184-197 (HNHPSGQTDPSPED) carry the JAMM motif motif.

The protein belongs to the UPF0758 family.

The sequence is that of UPF0758 protein AM1_4368 from Acaryochloris marina (strain MBIC 11017).